Consider the following 183-residue polypeptide: Inosine/xanthosine triphosphatase (183 aa).

Belongs to the YjjX NTPase family. In terms of assembly, homodimer. Requires Mg(2+) as cofactor. Mn(2+) serves as cofactor.

It catalyses the reaction XTP + H2O = XDP + phosphate + H(+). The catalysed reaction is ITP + H2O = IDP + phosphate + H(+). Functionally, phosphatase that hydrolyzes non-canonical purine nucleotides such as XTP and ITP to their respective diphosphate derivatives. Probably excludes non-canonical purines from DNA/RNA precursor pool, thus preventing their incorporation into DNA/RNA and avoiding chromosomal lesions. The sequence is that of Inosine/xanthosine triphosphatase from Vibrio cholerae serotype O1 (strain ATCC 39315 / El Tor Inaba N16961).